A 250-amino-acid chain; its full sequence is GPI-anchored hemophore PGA10 (250 aa).

An N-terminal signal peptide occupies residues Met1–Ala20. Residues Asn26 to Ala137 enclose the CFEM domain. 4 disulfide bridges follow: Cys54–Cys94, Cys58–Cys89, Cys68–Cys75, and Cys77–Cys110. Asp72 is a binding site for heme. The disordered stretch occupies residues Ser165 to Ala219. The span at Ala178–Thr192 shows a compositional bias: low complexity. Over residues Ser193–Glu209 the composition is skewed to basic and acidic residues. The segment covering Thr210–Ala219 has biased composition (low complexity). Asn230 carries the GPI-anchor amidated asparagine lipid modification. Residues Ala231–Ile250 constitute a propeptide, removed in mature form.

Belongs to the RBT5 family. Post-translationally, the GPI-anchor is attached to the protein in the endoplasmic reticulum and serves to target the protein to the cell surface. There, the glucosamine-inositol phospholipid moiety is cleaved off and the GPI-modified mannoprotein is covalently attached via its lipidless GPI glycan remnant to the 1,6-beta-glucan of the outer cell wall layer. In terms of processing, mannosylated.

It is found in the secreted. Its subcellular location is the cell wall. It localises to the cell membrane. Functionally, heme-binding protein involved in heme-iron utilization. The ability to acquire iron from host tissues is a major virulence factor of pathogenic microorganisms. Involved in biofilm formation. This is GPI-anchored hemophore PGA10 from Candida albicans (strain SC5314 / ATCC MYA-2876) (Yeast).